We begin with the raw amino-acid sequence, 332 residues long: Glycerol-3-phosphate dehydrogenase [NAD(P)+] (332 aa).

NADPH is bound by residues tryptophan 11, arginine 30, and lysine 108. Sn-glycerol 3-phosphate-binding residues include lysine 108, glycine 137, and serine 139. Residue alanine 141 coordinates NADPH. Sn-glycerol 3-phosphate is bound by residues lysine 192, aspartate 245, serine 255, arginine 256, and asparagine 257. The active-site Proton acceptor is the lysine 192. Position 256 (arginine 256) interacts with NADPH. Residues valine 280 and glutamate 282 each coordinate NADPH.

This sequence belongs to the NAD-dependent glycerol-3-phosphate dehydrogenase family.

The protein localises to the cytoplasm. The enzyme catalyses sn-glycerol 3-phosphate + NAD(+) = dihydroxyacetone phosphate + NADH + H(+). The catalysed reaction is sn-glycerol 3-phosphate + NADP(+) = dihydroxyacetone phosphate + NADPH + H(+). The protein operates within membrane lipid metabolism; glycerophospholipid metabolism. Functionally, catalyzes the reduction of the glycolytic intermediate dihydroxyacetone phosphate (DHAP) to sn-glycerol 3-phosphate (G3P), the key precursor for phospholipid synthesis. This chain is Glycerol-3-phosphate dehydrogenase [NAD(P)+], found in Burkholderia lata (strain ATCC 17760 / DSM 23089 / LMG 22485 / NCIMB 9086 / R18194 / 383).